A 388-amino-acid polypeptide reads, in one-letter code: Acyl-[acyl-carrier-protein] dehydrogenase MbtN (388 aa).

The protein belongs to the acyl-CoA dehydrogenase family. Requires FAD as cofactor.

It functions in the pathway siderophore biosynthesis; mycobactin biosynthesis. In terms of biological role, catalyzes the dehydrogenation at the alpha-beta position of ACP-bound acyl chains. This results in the introduction of a double bond in the lipidic chain, which is further transferred to the epsilon-amino group of lysine residue in the mycobactin core by MbtK. This chain is Acyl-[acyl-carrier-protein] dehydrogenase MbtN (mbtN), found in Mycolicibacterium paratuberculosis (strain ATCC BAA-968 / K-10) (Mycobacterium paratuberculosis).